The chain runs to 1026 residues: SWI/SNF-related matrix-associated actin-dependent regulator of chromatin subfamily A containing DEAD/H box 1 (1026 aa).

Methionine 1 carries the N-acetylmethionine modification. The disordered stretch occupies residues 1–82; it reads MNLFNLDRFR…DNERKASISY (82 aa). The segment covering 7–19 has biased composition (basic and acidic residues); the sequence is DRFRFEKRNKIEE. Threonine 54 carries the phosphothreonine modification. At serine 57 the chain carries Phosphoserine. The residue at position 71 (threonine 71) is a Phosphothreonine. A Glycyl lysine isopeptide (Lys-Gly) (interchain with G-Cter in SUMO2) cross-link involves residue lysine 77. Serine 79 carries the post-translational modification Phosphoserine. Lysine 84 participates in a covalent cross-link: Glycyl lysine isopeptide (Lys-Gly) (interchain with G-Cter in SUMO2). 5 positions are modified to phosphoserine: serine 124, serine 127, serine 132, serine 146, and serine 152. In terms of domain architecture, CUE 1 spans 157-199; the sequence is LKDAKLQTLKELFPQRSDNDLLKLIESTSTMDGAIAAALLMFG. Disordered stretches follow at residues 203 to 251 and 302 to 328; these read GGPR…NWEK and SQSE…KTKL. Serine 211 and serine 214 each carry phosphoserine. Residue tyrosine 217 is modified to Phosphotyrosine. Positions 226-238 are enriched in basic and acidic residues; sequence QSIKKTRLDHGEE. Residues serine 239 and serine 242 each carry the phosphoserine modification. The 44-residue stretch at 251-294 folds into the CUE 2 domain; sequence KQESIVLKLQKEFPNFDKQELREVLKEHEWMYTEALESLKVFAE. Serine 302 bears the Phosphoserine mark. Over residues 314-323 the composition is skewed to polar residues; the sequence is SRSQNYPKNA. A Glycyl lysine isopeptide (Lys-Gly) (interchain with G-Cter in SUMO2) cross-link involves residue lysine 335. The tract at residues 354 to 373 is disordered; it reads VVEDSEYDSGSDVGSSLDED. Lysine 471 is covalently cross-linked (Glycyl lysine isopeptide (Lys-Gly) (interchain with G-Cter in SUMO2)). The Helicase ATP-binding domain maps to 509 to 677; sequence ALVHKHGLNG…MSLLNFVMPH (169 aa). 521–529 serves as a coordination point for ATP; that stretch reads ADEMGLGKT. The DEGH box signature appears at 628–631; that stretch reads DEGH. Positions 721–738 match the Nuclear localization signal motif; that stretch reads RRVKEEVLKQLPPKKDRI. Residue lysine 724 forms a Glycyl lysine isopeptide (Lys-Gly) (interchain with G-Cter in SUMO2) linkage. Residues 858–1010 enclose the Helicase C-terminal domain; the sequence is VLGCILSELK…MTTVDEGDEG (153 aa). 897 to 904 provides a ligand contact to ATP; it reads YLRLDGKT. Lysine 996 participates in a covalent cross-link: Glycyl lysine isopeptide (Lys-Gly) (interchain with G-Cter in SUMO2). The DEGD box signature appears at 1005-1008; the sequence is DEGD.

This sequence belongs to the SNF2/RAD54 helicase family. As to quaternary structure, binds to DNA preferentially in the vicinity of transcriptional start sites. Interacts with MSH2 and TRIM28. Part of a complex composed of TRIM28, HDAC1, HDAC2 and EHMT2. Interacts with PCNA. In terms of tissue distribution, isoform 1 is expressed ubiquitously. Isoform 3 is expressed mainly in skin and esophagus. Expressed in fibroblasts and keratinocytes (at protein level).

Its subcellular location is the nucleus. It localises to the chromosome. It catalyses the reaction ATP + H2O = ADP + phosphate + H(+). Functionally, DNA helicase that possesses intrinsic ATP-dependent nucleosome-remodeling activity and is both required for DNA repair and heterochromatin organization. Promotes DNA end resection of double-strand breaks (DSBs) following DNA damage: probably acts by weakening histone DNA interactions in nucleosomes flanking DSBs. Required for the restoration of heterochromatin organization after replication. Acts at replication sites to facilitate the maintenance of heterochromatin by directing H3 and H4 histones deacetylation, H3 'Lys-9' trimethylation (H3K9me3) and restoration of silencing. The sequence is that of SWI/SNF-related matrix-associated actin-dependent regulator of chromatin subfamily A containing DEAD/H box 1 from Homo sapiens (Human).